The sequence spans 207 residues: Cyclic di-AMP synthase CdaS (207 aa).

A coiled-coil region spans residues alanine 13–histidine 37. The DAC domain occupies serine 63–proline 205.

The protein belongs to the adenylate cyclase family. DacB/CdaS subfamily. Forms dimers and probably also hexamers; the dimer may be active while the hexamer may not be active.

The catalysed reaction is 2 ATP = 3',3'-c-di-AMP + 2 diphosphate. Functionally, one of 3 paralogous diadenylate cyclases (DAC) in this bacteria, catalyzing the condensation of 2 ATP molecules into cyclic di-AMP (c-di-AMP). Upon expression in E.coli leads to c-di-AMP synthesis. Overexpression of the hyperactive mutant (L44F) in the absence of c-di-AMP phosphodiesterase GdpP leads to growth defects in log phase (long curly cell filaments) that disappear upon sporulation; spore formation is normal, showing sporulation is insensitive to the excess c-di-AMP. In B.subtilis c-di-AMP is a second messenger that mediates growth, DNA repair and cell wall homeostasis; it is toxic when present in excess. The chain is Cyclic di-AMP synthase CdaS from Bacillus subtilis (strain 168).